The sequence spans 296 residues: Pantothenate synthetase (296 aa).

30–37 (MGNLHEGH) contributes to the ATP binding site. The Proton donor role is filled by histidine 37. Glutamine 61 lines the (R)-pantoate pocket. Glutamine 61 is a binding site for beta-alanine. 149–152 (GEKD) provides a ligand contact to ATP. Residue glutamine 155 participates in (R)-pantoate binding. ATP is bound by residues valine 178 and 186-189 (MSSR).

The protein belongs to the pantothenate synthetase family. In terms of assembly, homodimer.

The protein localises to the cytoplasm. It carries out the reaction (R)-pantoate + beta-alanine + ATP = (R)-pantothenate + AMP + diphosphate + H(+). It functions in the pathway cofactor biosynthesis; (R)-pantothenate biosynthesis; (R)-pantothenate from (R)-pantoate and beta-alanine: step 1/1. Functionally, catalyzes the condensation of pantoate with beta-alanine in an ATP-dependent reaction via a pantoyl-adenylate intermediate. In Vibrio atlanticus (strain LGP32) (Vibrio splendidus (strain Mel32)), this protein is Pantothenate synthetase.